The chain runs to 381 residues: MAPGEKESGEGPAKSALRKIRTATLVISLARGWQQWANENSIRQAQEPTGWLPGGTQDSPQAPKPITPPTSHQKAQSAPKSPPRLPEGHGDGQSSEKAPEVSHIKKKEVSKTVVSKTYERGGDVSHLSHRYERDAGVLEPGQPENDIDRILHSHGSPTRRRKCANLVSELTKGWRVMEQEEPTWRSDSVDTEDSGYGGEAEERPEQDGVQVAVVRIKRPLPSQVNRFTEKLNCKAQQKYSPVGNLKGRWQQWADEHIQSQKLNPFSEEFDYELAMSTRLHKGDEGYGRPKEGTKTAERAKRAEEHIYREMMDMCFIICTMARHRRDGKIQVTFGDLFDRYVRISDKVVGILMRARKHGLVDFEGEMLWQGRDDHVVITLLK.

2 disordered regions span residues 39–156 (ENSI…SHGS) and 179–207 (QEEPTWRSDSVDTEDSGYGGEAEERPEQD). Polar residues predominate over residues 69–79 (PTSHQKAQSAP). Positions 97–110 (KAPEVSHIKKKEVS) are enriched in basic and acidic residues. Residues Ser156 and Ser188 each carry the phosphoserine modification. Over residues 179–188 (QEEPTWRSDS) the composition is skewed to basic and acidic residues. 2 actin-binding regions span residues 199–299 (EAEE…AERA) and 300–381 (KRAE…TLLK). 2 interaction with actin regions span residues 240–285 (SPVG…GDEG) and 352–381 (MRARKHGLVDFEGEMLWQGRDDHVVITLLK).

As to quaternary structure, binds F-actin and ABLIM1, ABLIM2 and ABLIM3. Interaction with ABLIM2 and ABLIM3 enhances activity.

The protein resides in the cytoplasm. It localises to the myofibril. Its subcellular location is the sarcomere. The protein localises to the cytoskeleton. In terms of biological role, acts as an activator of serum response factor (SRF)-dependent transcription possibly by inducing nuclear translocation of MKL1 or MKL2 and through a mechanism requiring Rho-actin signaling. The polypeptide is Actin-binding Rho-activating protein (Homo sapiens (Human)).